Reading from the N-terminus, the 84-residue chain is Trefoil factor 1 (84 aa).

The N-terminal stretch at 1-24 is a signal peptide; sequence MATMENKVICALVLVSMLALGTLA. A P-type domain is found at 29–72; the sequence is ETCTVAPRERQNCGFPGVTPSQCANKGCCFDDTVRGVPWCFYPN. Cystine bridges form between Cys-31/Cys-57, Cys-41/Cys-56, and Cys-51/Cys-68.

As to quaternary structure, heterodimer with GKN2; disulfide linked. Found in stomach, with highest levels in the upper gastric mucosal cells (at protein level). Detected in goblet cells of the small and large intestine and rectum, small submucosal glands in the esophagus, mucous acini of the sublingual gland, submucosal glands of the trachea, and epithelial cells lining the exocrine pancreatic ducts but not in the remainder of the pancreas (at protein level). Scattered expression is detected in the epithelial cells of the gallbladder and submucosal glands of the vagina, and weak expression is observed in the bronchial goblet cells of the pseudostratified epithelia in the respiratory system (at protein level). Detected in urine (at protein level). Strongly expressed in breast cancer but at low levels in normal mammary tissue. It is regulated by estrogen in MCF-7 cells. Strong expression found in normal gastric mucosa and in the regenerative tissues surrounding ulcerous lesions of gastrointestinal tract, but lower expression found in gastric cancer (at protein level).

It localises to the secreted. Functionally, stabilizer of the mucous gel overlying the gastrointestinal mucosa that provides a physical barrier against various noxious agents. May inhibit the growth of calcium oxalate crystals in urine. In Homo sapiens (Human), this protein is Trefoil factor 1 (TFF1).